A 205-amino-acid polypeptide reads, in one-letter code: Small ribosomal subunit protein uS4 (205 aa).

Basic and acidic residues predominate over residues 1-16 (MSKRETTKYKIDRRMG). A disordered region spans residues 1-46 (MSKRETTKYKIDRRMGENIWGRPKSPVNRRDYGPGQHGQRRKGKLS). The region spanning 94 to 157 (SRLDAVVYRA…KQLVLVLESV (64 aa)) is the S4 RNA-binding domain.

The protein belongs to the universal ribosomal protein uS4 family. Part of the 30S ribosomal subunit. Contacts protein S5. The interaction surface between S4 and S5 is involved in control of translational fidelity.

In terms of biological role, one of the primary rRNA binding proteins, it binds directly to 16S rRNA where it nucleates assembly of the body of the 30S subunit. Functionally, with S5 and S12 plays an important role in translational accuracy. This is Small ribosomal subunit protein uS4 from Bartonella tribocorum (strain CIP 105476 / IBS 506).